We begin with the raw amino-acid sequence, 677 residues long: Potassium channel KAT1 (677 aa).

The Cytoplasmic portion of the chain corresponds to 1–63 (MSISWTRNFF…PFNPRYRAWE (63 aa)). A helical membrane pass occupies residues 64-84 (MWLVLLVIYSAWICPFQFAFI). The Extracellular segment spans residues 85–90 (TYKKDA). A helical transmembrane segment spans residues 91-111 (IFIIDNIVNGFFAIDIILTFF). Residues 112–134 (VAYLDSHSYLLVDSPKKIAIRYL) are Cytoplasmic-facing. Residues 135–155 (STWFAFDVCSTAPFQPLSLLF) form a helical membrane-spanning segment. The Extracellular portion of the chain corresponds to 156–165 (NYNGSELGFR). A helical; Voltage-sensor transmembrane segment spans residues 166–186 (ILSMLRLWRLRRVSSLFARLE). The Cytoplasmic segment spans residues 187-200 (KDIRFNYFWIRCTK). The helical transmembrane segment at 201–221 (LISVTLFAIHCAGCFNYLIAD) threads the bilayer. At 222–248 (RYPNPRKTWIGAVYPNFKEASLWNRYV) the chain is on the extracellular side. Positions 249–268 (TALYWSITTLTTTGYGDFHA) form an intramembrane region, pore-forming. Residues 269 to 272 (ENPR) lie on the Extracellular side of the membrane. Residues 273–293 (EMLFDIFFMMFNLGLTAYLIG) traverse the membrane as a helical segment. Over 294-677 (NMTNLVVHWT…DGDHLYFSSN (384 aa)) the chain is Cytoplasmic. An a nucleoside 3',5'-cyclic phosphate-binding site is contributed by 377–496 (LFQGVSRNFL…RVIMNNLFMK (120 aa)). Over residues 568-577 (IERAKVERSS) the composition is skewed to basic and acidic residues. The segment at 568–601 (IERAKVERSSSETAGRSYANDSSKKDPYCSSSNQ) is disordered. One can recognise a KHA domain in the interval 612–677 (RVTIHMMSES…DGDHLYFSSN (66 aa)).

This sequence belongs to the potassium channel family. Plant (TC 1.A.1.4) subfamily. The potassium channel is probably composed of a homo- or heterotetrameric complex of pore-forming subunits. May interact with AKT2 and KAT2. Interacts with SLAC1 and SLAH3. As to expression, expressed in guard cells, and in roots.

The protein resides in the membrane. Functionally, highly selective inward-rectifying potassium channel. This voltage-gated channel could mediate long-term potassium influx into guard cells leading to stomatal opening. Assuming opened or closed conformations in response to the voltage difference across the membrane, the channel is activated by hyperpolarization. The channel activity is enhanced upon external acidification. Also permeable to ammonium ions. Blocked by tetraethylammonium and barium ions. In Arabidopsis thaliana (Mouse-ear cress), this protein is Potassium channel KAT1 (KAT1).